Here is a 79-residue protein sequence, read N- to C-terminus: Translational regulator CsrA (79 aa).

This sequence belongs to the CsrA/RsmA family. As to quaternary structure, homodimer; the beta-strands of each monomer intercalate to form a hydrophobic core, while the alpha-helices form wings that extend away from the core.

The protein resides in the cytoplasm. Functionally, a translational regulator that binds mRNA to regulate translation initiation and/or mRNA stability. Usually binds in the 5'-UTR at or near the Shine-Dalgarno sequence preventing ribosome-binding, thus repressing translation. Its main target seems to be the major flagellin gene, while its function is anatagonized by FliW. The sequence is that of Translational regulator CsrA from Leptospira biflexa serovar Patoc (strain Patoc 1 / Ames).